The primary structure comprises 155 residues: Immunoglobulin domain-containing protein oig-4 (155 aa).

Residues 1 to 22 (MSFRLWGRCIFFFCFLLEAIDS) form the signal peptide. Asn55 and Asn114 each carry an N-linked (GlcNAc...) asparagine glycan. The 82-residue stretch at 73-154 (GYKLLIICKA…MAKNFKAEYT (82 aa)) folds into the Ig-like C2-type domain. Cysteines 80 and 136 form a disulfide.

In terms of assembly, interacts with the non-alpha subunit of nicotinic acetylcholine receptor unc-29 and lev-10 to stabilize the complex formed between unc-29 and lev-10. Expressed in body wall muscle cells, the pharyngeal muscle cell pm6 and in four head neurons.

Its subcellular location is the synapse. It is found in the secreted. In terms of biological role, required for the localization of acetylcholine receptors at neuromuscular junctions and for subsequently controlling the response evoked by receptor stimulation. The sequence is that of Immunoglobulin domain-containing protein oig-4 from Caenorhabditis elegans.